A 641-amino-acid polypeptide reads, in one-letter code: Pre-mRNA-processing factor 39 (641 aa).

The disordered stretch occupies residues 1–50 (MEKSPEHCAEGSPSPATESAPSATEPPLPSTEPPLPSTEPPLPSTEPPLP). The segment covering 10–23 (EGSPSPATESAPSA) has biased composition (low complexity). Positions 24 to 50 (TEPPLPSTEPPLPSTEPPLPSTEPPLP) are enriched in pro residues. HAT repeat units lie at residues 50-82 (PPLPPDFEKYWKSVQAYPEDFNTWTYLLQYVEQ), 84-116 (NHLFAARKAFDAFLAHYPYCYGYWKKYADLEKK), 118-150 (NNILEADEVYRRGIQAITLSVDLWMHYLNFLKE), 158-193 (ETSLTLRGTFEHAVVSAGLDFRSDKLWEMYINWETE), 304-336 (NFEEEIKRPYFHVKPLEKAQLNNWKEYLEFELE), 338-370 (GSNERIVILFERCVIACACYEEFWIKYAKYMEN), and 372-407 (SVEGVRHVYNRACHVHLAKKPMVHLLWAAFEEQQGN).

The protein belongs to the PRP39 family.

It localises to the nucleus. Functionally, involved in pre-mRNA splicing. In Xenopus laevis (African clawed frog), this protein is Pre-mRNA-processing factor 39 (prpf39).